The primary structure comprises 149 residues: MRLFYFSAMSVIGLLARNNMVVVASDKPITAVETLGNPVHLHHEVVESGLVRSLRTREKDIQDSTVAKDDAIKVEEDRSSLIQTINTPRYAYWFSQQMTPLDVRRELHLPAHKLQAKPSKVYSGYVEYYNIHCSFFKYRDEPFCCVKEY.

Residues 1–24 (MRLFYFSAMSVIGLLARNNMVVVA) form the signal peptide. Positions 52–78 (RSLRTREKDIQDSTVAKDDAIKVEEDR) match the RxLR-dEER motif.

Belongs to the RxLR effector family.

It is found in the secreted. The protein resides in the host cytoplasm. The protein localises to the host nucleus. Its function is as follows. Effector that acts as a broad suppressor of cell death to interrupt plant immunity. Inhibits cell death induced by cell death-inducing proteins, including the PAMP elicitor INF1 from P.infestans. In Plasmopara viticola (Downy mildew of grapevine), this protein is Secreted RxLR effector protein 17.